Reading from the N-terminus, the 285-residue chain is uncharacterized protein (285 aa).

Belongs to the methyltransferase superfamily.

This is an uncharacterized protein from Mycobacterium tuberculosis (strain CDC 1551 / Oshkosh).